The sequence spans 193 residues: dTTP/UTP pyrophosphatase (193 aa).

The active-site Proton acceptor is Asp75.

Belongs to the Maf family. YhdE subfamily. Requires a divalent metal cation as cofactor.

The protein localises to the cytoplasm. It catalyses the reaction dTTP + H2O = dTMP + diphosphate + H(+). The enzyme catalyses UTP + H2O = UMP + diphosphate + H(+). In terms of biological role, nucleoside triphosphate pyrophosphatase that hydrolyzes dTTP and UTP. May have a dual role in cell division arrest and in preventing the incorporation of modified nucleotides into cellular nucleic acids. The chain is dTTP/UTP pyrophosphatase from Koribacter versatilis (strain Ellin345).